The sequence spans 203 residues: Large ribosomal subunit protein bL25 (203 aa).

A disordered region spans residues 182-203 (EITEEPETEEKKEEGASSVSNS).

This sequence belongs to the bacterial ribosomal protein bL25 family. CTC subfamily. Part of the 50S ribosomal subunit; part of the 5S rRNA/L5/L18/L25 subcomplex. Contacts the 5S rRNA. Binds to the 5S rRNA independently of L5 and L18.

This is one of the proteins that binds to the 5S RNA in the ribosome where it forms part of the central protuberance. The polypeptide is Large ribosomal subunit protein bL25 (Caldicellulosiruptor saccharolyticus (strain ATCC 43494 / DSM 8903 / Tp8T 6331)).